A 492-amino-acid polypeptide reads, in one-letter code: GlcNAc-binding protein A (492 aa).

Residues 1-23 (MNKSSTKTLIALSMMAVSSGVSA) form the signal peptide. The region spanning 24–204 (HGYVSETNDG…AFYNVIDVKF (181 aa)) is the Chitin-binding type-4 domain. Positions 443 to 484 (AGTKVLAEDSNVYQCKEFPYSGYCVQWTETATNFAPGVGSDW) constitute a Chitin-binding type-3 domain.

Belongs to the GbpA family.

The protein resides in the secreted. Functionally, probably interacts with GlcNAc residues. May promote attachment to both epithelial cell surfaces and chitin. The polypeptide is GlcNAc-binding protein A (Aliivibrio fischeri (strain MJ11) (Vibrio fischeri)).